The chain runs to 465 residues: UDP-N-acetylmuramate--L-alanine ligase (465 aa).

114-120 (GTHGKTT) serves as a coordination point for ATP.

It belongs to the MurCDEF family.

It is found in the cytoplasm. It catalyses the reaction UDP-N-acetyl-alpha-D-muramate + L-alanine + ATP = UDP-N-acetyl-alpha-D-muramoyl-L-alanine + ADP + phosphate + H(+). The protein operates within cell wall biogenesis; peptidoglycan biosynthesis. Cell wall formation. The chain is UDP-N-acetylmuramate--L-alanine ligase from Chlorobium phaeobacteroides (strain BS1).